A 908-amino-acid chain; its full sequence is DNA (cytosine-5)-methyltransferase 3A (908 aa).

Residues 1-13 (MPSSGPGDTSSSS) show a composition bias toward low complexity. 2 disordered regions span residues 1 to 183 (MPSS…PMPR) and 226 to 281 (NQAS…PEYE). Residues 14–37 (LEREDDRKEGEEQEENRGKEERQE) show a composition bias toward basic and acidic residues. The segment covering 44 to 54 (KVGRPGRKRKH) has biased composition (basic residues). The segment covering 69–80 (TTKSQPMAQDSG) has biased composition (polar residues). S102 is modified (phosphoserine). Over residues 110–124 (GAPAEGEGTETPPEA) the composition is skewed to low complexity. Residue T120 is modified to Phosphothreonine. K158 participates in a covalent cross-link: Glycyl lysine isopeptide (Lys-Gly) (interchain with G-Cter in SUMO2). Omega-N-methylarginine is present on R167. An interaction with DNMT1 and DNMT3B region spans residues 195-399 (SKRKRDEWLA…DSGKAVEVQN (205 aa)). 2 positions are modified to phosphoserine: S239 and S251. Residues 242 to 256 (AVQQPTDPASPTVAT) show a composition bias toward polar residues. Position 257 is a phosphothreonine (T257). Over residues 265 to 275 (AGDKNATKAAD) the composition is skewed to basic and acidic residues. The PWWP domain maps to 288–346 (IGELVWGKLRGFSWWPGRIVSWWMTGRSRAAEGTRWVMWFGDGKFSVVCVEKLMPLSSF). Phosphoserine occurs at positions 386 and 389. The segment at 443–462 (AYAPPPPAKKPRKSTTEKPK) is disordered. One can recognise an ADD domain in the interval 478 to 610 (EVRQKCRNIE…LQMFFANNHD (133 aa)). A GATA-type; atypical zinc finger spans residues 489 to 519 (ICISCGSLNVTLEHPLFIGGMCQNCKNCFLE). Positions 490–582 (CISCGSLNVT…KEDPWNCYMC (93 aa)) are interaction with the PRC2/EED-EZH2 complex. Residues 530 to 586 (QSYCTICCGGREVLMCGNNNCCRCFCVECVDLLVGPGAAQAAIKEDPWNCYMCGHKG) form a PHD-type; atypical zinc finger. Residues 630 to 908 (IRVLSLFDGI…APLKEYFACV (279 aa)) enclose the SAM-dependent MTase C5-type domain. Residues 637–641 (DGIAT), E660, and 682–684 (DVR) contribute to the S-adenosyl-L-methionine site. The active site involves C706. At C706 the chain carries S-methylcysteine; by autocatalysis. 887-889 (RSW) provides a ligand contact to S-adenosyl-L-methionine.

It belongs to the class I-like SAM-binding methyltransferase superfamily. C5-methyltransferase family. As to quaternary structure, heterotetramer composed of 1 DNMT3A homodimer and 2 DNMT3L subunits (DNMT3L-DNMT3A-DNMT3A-DNMT3L). Interacts with DNMT1 and DNMT3B. Interacts with MPHOSPH8. Interacts with histone H3 that is not methylated at 'Lys-4' (H3K4). Binds the ZBTB18 transcriptional repressor. Interacts with SETDB1. Associates with HDAC1 through its ADD domain. Interacts with UHRF1. Interacts with the PRC2/EED-EZH2 complex. Interacts with UBC9, PIAS1 and PIAS2. Interacts with SPOCD1. Interacts with ZNF263; recruited to the SIX3 promoter along with other proteins involved in chromatin modification and transcriptional corepression where it contributes to transcriptional repression. In terms of processing, auto-methylated at Cys-706: auto-methylation takes place in absence of DNA substrate and inactivates the DNA methyltransferase activity. Inactivation by auto-methylation may be used to inactivate unused DNA methyltransferases in the cell. Sumoylated; sumoylation disrupts the ability to interact with histone deacetylases (HDAC1 and HDAC2) and repress transcription. In terms of tissue distribution, isoform 1 is expressed ubiquitously at low levels. Expression of isoform 2 is restricted to tissues containing cells which are undergoing active de novo methylation, including spleen, testis and thymus.

Its subcellular location is the nucleus. The protein localises to the chromosome. It localises to the cytoplasm. It carries out the reaction a 2'-deoxycytidine in DNA + S-adenosyl-L-methionine = a 5-methyl-2'-deoxycytidine in DNA + S-adenosyl-L-homocysteine + H(+). The catalysed reaction is L-cysteinyl-[protein] + S-adenosyl-L-methionine = S-methyl-L-cysteinyl-[protein] + S-adenosyl-L-homocysteine + H(+). Activated by binding to the regulatory factor DNMT3L. Auto-methylation at Cys-706 in absence of DNA inactivates the DNA methyltransferase activity. Required for genome-wide de novo methylation and is essential for the establishment of DNA methylation patterns during development. DNA methylation is coordinated with methylation of histones. It modifies DNA in a non-processive manner and also methylates non-CpG sites. May preferentially methylate DNA linker between 2 nucleosomal cores and is inhibited by histone H1. Plays a role in paternal and maternal imprinting. Required for methylation of most imprinted loci in germ cells. Acts as a transcriptional corepressor for ZBTB18. Recruited to trimethylated 'Lys-36' of histone H3 (H3K36me3) sites. Can actively repress transcription through the recruitment of HDAC activity. Also has weak auto-methylation activity on Cys-706 in absence of DNA. The protein is DNA (cytosine-5)-methyltransferase 3A of Mus musculus (Mouse).